The chain runs to 643 residues: Threonine--tRNA ligase (643 aa).

A TGS domain is found at 1-61 (MIKVSLKDGS…NEDVSLSICT (61 aa)). Residues 240 to 540 (DHNKLGRELK…LIEKYAGAFP (301 aa)) form a catalytic region. Zn(2+) contacts are provided by Cys-335, His-386, and His-517.

Belongs to the class-II aminoacyl-tRNA synthetase family. In terms of assembly, homodimer. Zn(2+) serves as cofactor.

It localises to the cytoplasm. It catalyses the reaction tRNA(Thr) + L-threonine + ATP = L-threonyl-tRNA(Thr) + AMP + diphosphate + H(+). In terms of biological role, catalyzes the attachment of threonine to tRNA(Thr) in a two-step reaction: L-threonine is first activated by ATP to form Thr-AMP and then transferred to the acceptor end of tRNA(Thr). Also edits incorrectly charged L-seryl-tRNA(Thr). The polypeptide is Threonine--tRNA ligase (Clostridium botulinum (strain Alaska E43 / Type E3)).